Reading from the N-terminus, the 332-residue chain is 5,10-methylenetetrahydromethanopterin reductase (332 aa).

The protein belongs to the mer family.

It is found in the cytoplasm. It catalyses the reaction 5-methyl-5,6,7,8-tetrahydromethanopterin + oxidized coenzyme F420-(gamma-L-Glu)(n) + H(+) = 5,10-methylenetetrahydromethanopterin + reduced coenzyme F420-(gamma-L-Glu)(n). It participates in metabolic intermediate metabolism; lactate oxidation. Its function is as follows. Catalyzes the oxidation of methyl-H(4)MPT to methylene-H(4)MPT. The sequence is that of 5,10-methylenetetrahydromethanopterin reductase from Archaeoglobus fulgidus (strain ATCC 49558 / DSM 4304 / JCM 9628 / NBRC 100126 / VC-16).